Here is a 905-residue protein sequence, read N- to C-terminus: DNA mismatch repair protein MutS (905 aa).

The segment at 1 to 95 (MELSLQGSLF…PAWGHHSQLK (95 aa)) is disordered. Positions 38 to 50 (NLSDADLSKDALA) are enriched in basic and acidic residues. An ATP-binding site is contributed by 721-728 (GPNASGKS).

Belongs to the DNA mismatch repair MutS family.

In terms of biological role, this protein is involved in the repair of mismatches in DNA. It is possible that it carries out the mismatch recognition step. This protein has a weak ATPase activity. The polypeptide is DNA mismatch repair protein MutS (Synechococcus sp. (strain CC9902)).